The following is a 161-amino-acid chain: Prs ADP-ribosylating toxin (161 aa).

This sequence belongs to the MbcT/ParT/Res family. Homodimer, forms heterotetrameric ParS(2)-ParT(2) complexes. Post-translationally, consumes NAD(+) and auto-ADP-ribosylates on the tryptic fragment Ala-47-Arg-66 in vitro. Also auto-ADP-ribosylates using NADP(+).

Toxic component of a type II toxin-antitoxin (TA) system. Expression in E.coli inhibits cell growth; bacteriostasis is neutralized by expression of cognate antitoxin ParS. ADP-ribosylates E.coli ribose-phosphate pyrophosphokinase (RPPK, prs) using NAD(+) in vitro; ADP-ribosylates RPPK on 'Lys-182' and 'Ser-202'. Cannot use NADP(+). Also auto-ADP-ribosylates in vitro; in the presence of RPPK auto-ADP-ribosylation decreases. In Sphingobium sp. (strain YBL2), this protein is Prs ADP-ribosylating toxin.